The sequence spans 328 residues: MNRKKIIVAAVIVALLATLAYGWHYYRQQNDASLTLYGNVDIRTVNLGFRVAGRLASLAVDEGDDIHPGQTLGKLDDGPYLNALKQAQANVQSAQAQLALLKAGYREEEIAQVRSEVAQRQAAFDYADNFLKRQQGLWASKAVSANELENARTARNQARANLQAAKDKLAQFLSGNRPQEIAQAEANLAQTEAELAQAQLNLQDTILLAPSAGTVLTRAVEPGTILSASNTVFTVSLTDPVWVRAYVSERHLGQAIPGSEVEVFTDGRPDKPYHGKIGFVSPTAEFTPKTVETPDLRTDLVYRLRIIITDADESLRQGMPVTVRFPQR.

An N-terminal signal peptide occupies residues 1 to 22 (MNRKKIIVAAVIVALLATLAYG). Coiled coils occupy residues 80–109 (YLNA…REEE) and 142–209 (AVSA…ILLA).

Belongs to the UPF0194 family.

The protein resides in the periplasm. The chain is UPF0194 membrane protein YPTS_1292 from Yersinia pseudotuberculosis serotype IB (strain PB1/+).